A 618-amino-acid polypeptide reads, in one-letter code: Proline--tRNA ligase (618 aa).

It belongs to the class-II aminoacyl-tRNA synthetase family. ProS type 1 subfamily. As to quaternary structure, homodimer.

It localises to the cytoplasm. The enzyme catalyses tRNA(Pro) + L-proline + ATP = L-prolyl-tRNA(Pro) + AMP + diphosphate. Functionally, catalyzes the attachment of proline to tRNA(Pro) in a two-step reaction: proline is first activated by ATP to form Pro-AMP and then transferred to the acceptor end of tRNA(Pro). As ProRS can inadvertently accommodate and process non-cognate amino acids such as alanine and cysteine, to avoid such errors it has two additional distinct editing activities against alanine. One activity is designated as 'pretransfer' editing and involves the tRNA(Pro)-independent hydrolysis of activated Ala-AMP. The other activity is designated 'posttransfer' editing and involves deacylation of mischarged Ala-tRNA(Pro). The misacylated Cys-tRNA(Pro) is not edited by ProRS. The polypeptide is Proline--tRNA ligase (Streptococcus pyogenes serotype M12 (strain MGAS2096)).